A 1040-amino-acid chain; its full sequence is Chromatin modification-related protein rik1 (1040 aa).

The protein belongs to the DDB1 family. Component of the Clr4 methyltransferase complex (ClrC) composed of at least clr4, rik1, pcu4, rbx1, raf1 and raf2. The cullin pcu4, rik1, raf1, raf2 and the ring-box protein rbx1 are components of an E3 ubiquitin ligase, whose activity is essential for heterochromatin assembly.

The protein resides in the nucleus. Its subcellular location is the cytoplasm. It localises to the cytoskeleton. The protein localises to the microtubule organizing center. It is found in the spindle pole body. The protein resides in the chromosome. In terms of biological role, component of the Clr4 methyltransferase complex (ClrC) which contributes to the establishment of heterochromatin by specifically methylating histone H3 to form H3K9me. ClrC preferentially ubiquitylates H3K14 and ClrC-mediated H3 ubiquitination promotes clr4 methyltransferase activity for the methylation of H3K9. H3K9me represents a specific tag for epigenetic transcriptional repression by recruiting swi6/HP1 to methylated histones which leads to transcriptional silencing within centromeric heterochromatin, telomeric regions and at the silent mating-type loci. Rik1 is involved in the RNAi-mediated targeting of ClrC to heterochromatic repeat elements. Rik1 also has a function in meiotic telomere clustering. This chain is Chromatin modification-related protein rik1 (rik1), found in Schizosaccharomyces pombe (strain 972 / ATCC 24843) (Fission yeast).